The following is a 108-amino-acid chain: Thiosulfate sulfurtransferase GlpE (108 aa).

A Rhodanese domain is found at 17-105 (HQGTAVLVDI…WHRHFPSEVA (89 aa)). Catalysis depends on cysteine 65, which acts as the Cysteine persulfide intermediate.

Belongs to the GlpE family.

It localises to the cytoplasm. The enzyme catalyses thiosulfate + hydrogen cyanide = thiocyanate + sulfite + 2 H(+). It catalyses the reaction thiosulfate + [thioredoxin]-dithiol = [thioredoxin]-disulfide + hydrogen sulfide + sulfite + 2 H(+). Transferase that catalyzes the transfer of sulfur from thiosulfate to thiophilic acceptors such as cyanide or dithiols. May function in a CysM-independent thiosulfate assimilation pathway by catalyzing the conversion of thiosulfate to sulfite, which can then be used for L-cysteine biosynthesis. This is Thiosulfate sulfurtransferase GlpE from Citrobacter koseri (strain ATCC BAA-895 / CDC 4225-83 / SGSC4696).